We begin with the raw amino-acid sequence, 121 residues long: Nitrogen fixation nifHD region GlnB-like protein 2 (121 aa).

Belongs to the P(II) protein family.

Its function is as follows. Could be involved in the regulation of nitrogen fixation. The chain is Nitrogen fixation nifHD region GlnB-like protein 2 (glnBB) from Methanothermobacter marburgensis (strain ATCC BAA-927 / DSM 2133 / JCM 14651 / NBRC 100331 / OCM 82 / Marburg) (Methanobacterium thermoautotrophicum).